We begin with the raw amino-acid sequence, 204 residues long: Protein C (204 aa).

The tract at residues 1–78 (MPSFLRGILK…TEQSQRRPKI (78 aa)) is disordered. Positions 10–20 (KPKERHHENKN) are enriched in basic and acidic residues. Low complexity predominate over residues 25–34 (SSDSLTSSYP).

Belongs to the respirovirus protein C family.

The protein is Protein C (P/V/C) of Homo sapiens (Human).